A 474-amino-acid polypeptide reads, in one-letter code: uncharacterized protein (474 aa).

Transmembrane regions (helical) follow at residues 17-39 (ILGGIIQIIGIFTLVPCIVSVYY), 44-61 (FLNFLIPGLFFSIFGFVL), 81-103 (LAWLIASFIGAIPLYLSIDYFSY), 144-166 (GVGILVLSALVLARSGTVAYLLY), 186-208 (IIWIYILYTILGVLLLYLSGLSF), 239-256 (IVMIGIMMVGGVMSFSIH), 268-286 (IQTKYALIVTAFISIIISI), 319-341 (LSLFLIIFLMLIGGGAGTTTGGV), 385-407 (AFVVFFLYCLSSFLTALIFIALG), and 444-466 (IIAMWIGRLEIIPVLVLFATLYF).

Belongs to the TrkH potassium transport family.

It is found in the cell membrane. This is an uncharacterized protein from Methanocaldococcus jannaschii (strain ATCC 43067 / DSM 2661 / JAL-1 / JCM 10045 / NBRC 100440) (Methanococcus jannaschii).